The primary structure comprises 200 residues: Molybdenum cofactor guanylyltransferase (200 aa).

Residues 10-12, K23, N51, D69, and D99 contribute to the GTP site; that span reads LAG. Mg(2+) is bound at residue D99.

The protein belongs to the MobA family. In terms of assembly, monomer. The cofactor is Mg(2+).

Its subcellular location is the cytoplasm. It catalyses the reaction Mo-molybdopterin + GTP + H(+) = Mo-molybdopterin guanine dinucleotide + diphosphate. Transfers a GMP moiety from GTP to Mo-molybdopterin (Mo-MPT) cofactor (Moco or molybdenum cofactor) to form Mo-molybdopterin guanine dinucleotide (Mo-MGD) cofactor. This chain is Molybdenum cofactor guanylyltransferase, found in Shewanella pealeana (strain ATCC 700345 / ANG-SQ1).